Consider the following 147-residue polypeptide: Large ribosomal subunit protein uL13 (147 aa).

The disordered stretch occupies residues 128–147 (PEHPHSAQQPVPYELKQVAQ).

Belongs to the universal ribosomal protein uL13 family. As to quaternary structure, part of the 50S ribosomal subunit.

This protein is one of the early assembly proteins of the 50S ribosomal subunit, although it is not seen to bind rRNA by itself. It is important during the early stages of 50S assembly. The chain is Large ribosomal subunit protein uL13 from Mycobacterium bovis (strain BCG / Pasteur 1173P2).